The primary structure comprises 194 residues: Histone H1 (194 aa).

Alanine 1 is modified (N-acetylalanine; partial). Residues 1-14 (AEVAPAPAAAAPAK) show a composition bias toward low complexity. 2 disordered regions span residues 1–31 (AEVA…GPAV) and 105–194 (AKKP…AAKK). The span at 15 to 26 (APKKKAAAKPKK) shows a compositional bias: basic residues. One can recognise an H15 domain in the interval 27-100 (SGPAVGELAG…GASGSFKLNK (74 aa)). The span at 116–194 (KAKKVAAKKP…KVKKPAAAKK (79 aa)) shows a compositional bias: basic residues. 3 positions are modified to phosphoserine: serine 145, serine 161, and serine 182.

This sequence belongs to the histone H1/H5 family.

It is found in the nucleus. It localises to the chromosome. Its function is as follows. Histones H1 are necessary for the condensation of nucleosome chains into higher-order structures. The chain is Histone H1 from Salmo trutta (Brown trout).